A 440-amino-acid polypeptide reads, in one-letter code: MGSSHLLNKGLPLGVRPPIMNGPLHPRPLVALLDGRDCTVEMPILKDVATVAFCDAQSTQEIHEKVLNEAVGALMYHTITLTREDLEKFKALRIIVRIGSGFDNIDIKSAGDLGIAVCNVPAASVEETADSTLCHILNLYRRATWLHQALREGTRVQSVEQIREVASGAARIRGETLGIIGLGRVGQAVALRAKAFGFNVLFYDPYLSDGVERALGLQRVSTLQDLLFHSDCVTLHCGLNEHNHHLINDFTVKQMRQGAFLVNTARGGLVDEKALAQALKEGRIRGAALDVHESEPFSFSQGPLKDAPNLICTPHAAWYSEQASIEMREEAAREIRRAITGRIPDSLKNCVNKDHLTAATHWASMDPAVVHPELNGAAYRYPPGVVGVAPTGIPAAVEGIVPSAMSLSHGLPPVAHPPHAPSPGQTVKPEADRDHASDQL.

Residues 1-70 (MGSSHLLNKG…EIHEKVLNEA (70 aa)) form an interaction with GLIS2 1 region. NAD(+) is bound by residues Ser100, 180–185 (IGLGRV), Asp204, 237–243 (CGLNEHN), 264–266 (TAR), and Asp290. Arg266 is a catalytic residue. The interaction with GLIS2 2 stretch occupies residues 288–360 (ALDVHESEPF…VNKDHLTAAT (73 aa)). Glu295 is an active-site residue. Position 300 is a phosphoserine (Ser300). The Proton donor role is filled by His315. 315-318 (HAAW) provides a ligand contact to NAD(+). The interval 408 to 440 (SHGLPPVAHPPHAPSPGQTVKPEADRDHASDQL) is disordered. Ser422 carries the post-translational modification Phosphoserine; by HIPK2. A Glycyl lysine isopeptide (Lys-Gly) (interchain with G-Cter in SUMO) cross-link involves residue Lys428. Residues 429 to 440 (PEADRDHASDQL) are compositionally biased toward basic and acidic residues.

Belongs to the D-isomer specific 2-hydroxyacid dehydrogenase family. Homo- or heterodimer. Heterodimer with CTBP2. Interacts with PRDM16; the interaction represses white adipose tissue (WAT)-specific genes expression. Interacts with GLIS2, FOXP2, HDAC4, HDAC5, HDAC9 and ZNF217. Interacts with ELK3 (via its PXDLS motif). Interacts with RBBP8 (via its PXDLS motif); the interaction is disrupted by binding to adenovirus E1A. Interacts with FOXP1, HIPK2, PNN, NRIP1, MECOM, ZFHX1B and WIZ. Interacts with ZNF366 (via PXDLS motif). Interaction with SATB1 (non-acetylated form); the interaction stabilizes its attachment to DNA and promotes transcription repression. Interacts with BCL6; the interaction is required for BCL6 transcriptional autoinhibition and inhibition of some BCL6 target genes. Interacts with IKZF4. Interacts with MCRIP1 (unphosphorylated form, via the PXDLS motif); competitively inhibiting CTBP-ZEB1 interaction. Interacts with Bassoon/BSN; this interaction targets and anchors CTBP1 to presynapses. Interacts with SIMC1. As to quaternary structure, (Microbial infection) Interacts with Epstein-Barr virus EBNA3. Interacts with Epstein-Barr virus EBNA6; this interaction leads to gene repression, but also seems to interfere with the repressive function of CtBP pre-bound to DNA, leading to EBNA6 mediated up-regulation of many cellular genes. In terms of assembly, (Microbial infection) Interacts with adenovirus E1A protein (via its C-terminus); the interaction disrupts the interaction of CTBP1 with RBBP8. (Microbial infection) Interacts with human adenovirus 5 E1A protein; this interaction seems to potentiate viral replication. NAD(+) serves as cofactor. Post-translationally, the level of phosphorylation appears to be regulated during the cell cycle. Phosphorylation by HIPK2 on Ser-422 induces proteasomal degradation. In terms of processing, ADP-ribosylated; when cells are exposed to brefeldin A. Sumoylation on Lys-428 is promoted by the E3 SUMO-protein ligase CBX4. In terms of tissue distribution, expressed in germinal center B-cells.

The protein localises to the cytoplasm. The protein resides in the nucleus. Its function is as follows. Corepressor targeting diverse transcription regulators such as GLIS2 or BCL6. Has dehydrogenase activity. Involved in controlling the equilibrium between tubular and stacked structures in the Golgi complex. Functions in brown adipose tissue (BAT) differentiation. The chain is C-terminal-binding protein 1 (CTBP1) from Homo sapiens (Human).